The primary structure comprises 520 residues: Cytochrome P450 1A1 (520 aa).

Residue Phe-230 coordinates substrate. Residue Cys-464 coordinates heme.

This sequence belongs to the cytochrome P450 family. The cofactor is heme.

Its subcellular location is the endoplasmic reticulum membrane. The protein localises to the microsome membrane. It catalyses the reaction an organic molecule + reduced [NADPH--hemoprotein reductase] + O2 = an alcohol + oxidized [NADPH--hemoprotein reductase] + H2O + H(+). Its function is as follows. Cytochromes P450 are a group of heme-thiolate monooxygenases. In liver microsomes, this enzyme is involved in an NADPH-dependent electron transport pathway. It oxidizes a variety of structurally unrelated compounds, including steroids, fatty acids, and xenobiotics. The chain is Cytochrome P450 1A1 (cyp1a1) from Dicentrarchus labrax (European seabass).